The following is a 726-amino-acid chain: X-ray repair cross-complementing protein 5 (726 aa).

The 153-residue stretch at 8–160 (AVVLCMDVGL…ANLKKAEITL (153 aa)) folds into the VWFA domain. Positions 137–164 (LSSPFSVDQLEVIIANLKKAEITLQFFL) are leucine-zipper. Over residues 175–186 (GSSNNRGNAGSS) the composition is skewed to low complexity. The segment at 175-198 (GSSNNRGNAGSSDRGCGPGKGLSD) is disordered. The Ku domain occupies 253 to 449 (GSSLSIRIVG…NKKFTPTESQ (197 aa)). The EEXXXDL motif motif lies at 714–722 (EDEGDVDDL).

It belongs to the ku80 family. Heterodimer composed of xrcc5/Ku80 and xrcc6/Ku70. In terms of processing, ubiquitinated via 'Lys-48'-linked polyubiquitination at DNA double strand break sites (DSBs), leading to its release from DSBs and subsequent proteasomal degradation. Polyubiquitination is not required for completion of NHEJ. In terms of tissue distribution, expressed at high levels in oocyte and testis.

The protein localises to the nucleus. In terms of biological role, single-stranded DNA-dependent ATP-dependent helicase that plays a key role in DNA non-homologous end joining (NHEJ). This Xenopus laevis (African clawed frog) protein is X-ray repair cross-complementing protein 5.